We begin with the raw amino-acid sequence, 425 residues long: Dihydroorotase (425 aa).

Residues His61 and His63 each contribute to the Zn(2+) site. Residues 63-65 and Asn95 contribute to the substrate site; that span reads HLR. The Zn(2+) site is built by Lys146, His175, His224, and Asp293. The residue at position 146 (Lys146) is an N6-carboxylysine. Residue Asp293 is part of the active site. Substrate contacts are provided by residues His297 and 311 to 312; that span reads PG.

It belongs to the metallo-dependent hydrolases superfamily. DHOase family. Class I DHOase subfamily. It depends on Zn(2+) as a cofactor.

The enzyme catalyses (S)-dihydroorotate + H2O = N-carbamoyl-L-aspartate + H(+). It participates in pyrimidine metabolism; UMP biosynthesis via de novo pathway; (S)-dihydroorotate from bicarbonate: step 3/3. Its function is as follows. Catalyzes the reversible cyclization of carbamoyl aspartate to dihydroorotate. The polypeptide is Dihydroorotase (Aeropyrum pernix (strain ATCC 700893 / DSM 11879 / JCM 9820 / NBRC 100138 / K1)).